Consider the following 398-residue polypeptide: Probable aminomethyltransferase (398 aa).

The protein belongs to the GcvT family. In terms of assembly, the glycine cleavage system is composed of four proteins: P, T, L and H.

The catalysed reaction is N(6)-[(R)-S(8)-aminomethyldihydrolipoyl]-L-lysyl-[protein] + (6S)-5,6,7,8-tetrahydrofolate = N(6)-[(R)-dihydrolipoyl]-L-lysyl-[protein] + (6R)-5,10-methylene-5,6,7,8-tetrahydrofolate + NH4(+). Its function is as follows. The glycine cleavage system catalyzes the degradation of glycine. This Thermococcus kodakarensis (strain ATCC BAA-918 / JCM 12380 / KOD1) (Pyrococcus kodakaraensis (strain KOD1)) protein is Probable aminomethyltransferase.